A 211-amino-acid chain; its full sequence is Nucleoside triphosphate pyrophosphatase (211 aa).

Asp78 acts as the Proton acceptor in catalysis.

This sequence belongs to the Maf family. A divalent metal cation is required as a cofactor.

It is found in the cytoplasm. The catalysed reaction is a ribonucleoside 5'-triphosphate + H2O = a ribonucleoside 5'-phosphate + diphosphate + H(+). The enzyme catalyses a 2'-deoxyribonucleoside 5'-triphosphate + H2O = a 2'-deoxyribonucleoside 5'-phosphate + diphosphate + H(+). Its function is as follows. Nucleoside triphosphate pyrophosphatase. May have a dual role in cell division arrest and in preventing the incorporation of modified nucleotides into cellular nucleic acids. The chain is Nucleoside triphosphate pyrophosphatase from Mycolicibacterium smegmatis (strain ATCC 700084 / mc(2)155) (Mycobacterium smegmatis).